Here is a 589-residue protein sequence, read N- to C-terminus: Phenylalanine--tRNA ligase beta subunit (589 aa).

The B5 domain maps to 290-368 (LNPTCFKADI…IAYGYDNLKH (79 aa)). Aspartate 346, aspartate 352, glutamate 355, and aspartate 356 together coordinate Mg(2+).

Belongs to the phenylalanyl-tRNA synthetase beta subunit family. Type 2 subfamily. Tetramer of two alpha and two beta subunits. It depends on Mg(2+) as a cofactor.

The protein localises to the cytoplasm. Its subcellular location is the nucleus. It catalyses the reaction tRNA(Phe) + L-phenylalanine + ATP = L-phenylalanyl-tRNA(Phe) + AMP + diphosphate + H(+). This Schizosaccharomyces pombe (strain 972 / ATCC 24843) (Fission yeast) protein is Phenylalanine--tRNA ligase beta subunit (frs1).